A 273-amino-acid chain; its full sequence is Proteasome subunit beta type-10 (273 aa).

N-acetylmethionine is present on Met1. A propeptide spans 1–39 (removed in mature form); it reads MQKTVLEPQRGFSFENCERNAALQRALPGLRVPHARKTG. Residue Thr40 is the Nucleophile of the active site. Position 230 is a phosphoserine (Ser230).

This sequence belongs to the peptidase T1B family. In terms of assembly, the 26S proteasome consists of a 20S proteasome core and two 19S regulatory subunits. The 20S proteasome core is composed of 28 subunits that are arranged in four stacked rings, resulting in a barrel-shaped structure. The two end rings are each formed by seven alpha subunits, and the two central rings are each formed by seven beta subunits. The catalytic chamber with the active sites is on the inside of the barrel. Component of the immunoproteasome, where it displaces the equivalent housekeeping subunit PSMB7. Component of the spermatoproteasome, a form of the proteasome specifically found in testis. Post-translationally, autocleaved. The resulting N-terminal Thr residue of the mature subunit is responsible for the nucleophile proteolytic activity.

It is found in the cytoplasm. The protein localises to the nucleus. It catalyses the reaction Cleavage of peptide bonds with very broad specificity.. Functionally, the proteasome is a multicatalytic proteinase complex which is characterized by its ability to cleave peptides with Arg, Phe, Tyr, Leu, and Glu adjacent to the leaving group at neutral or slightly basic pH. The proteasome has an ATP-dependent proteolytic activity. This subunit is involved in antigen processing to generate class I binding peptides. This Bos taurus (Bovine) protein is Proteasome subunit beta type-10 (PSMB10).